Here is a 314-residue protein sequence, read N- to C-terminus: 4-hydroxy-3-methylbut-2-enyl diphosphate reductase (314 aa).

Cys12 contacts [4Fe-4S] cluster. (2E)-4-hydroxy-3-methylbut-2-enyl diphosphate contacts are provided by His43 and His81. 2 residues coordinate dimethylallyl diphosphate: His43 and His81. The isopentenyl diphosphate site is built by His43 and His81. Cys103 provides a ligand contact to [4Fe-4S] cluster. His131 serves as a coordination point for (2E)-4-hydroxy-3-methylbut-2-enyl diphosphate. His131 provides a ligand contact to dimethylallyl diphosphate. Isopentenyl diphosphate is bound at residue His131. Catalysis depends on Glu133, which acts as the Proton donor. Thr170 contributes to the (2E)-4-hydroxy-3-methylbut-2-enyl diphosphate binding site. A [4Fe-4S] cluster-binding site is contributed by Cys198. Positions 226, 228, and 271 each coordinate (2E)-4-hydroxy-3-methylbut-2-enyl diphosphate. Dimethylallyl diphosphate contacts are provided by Ser226, Asn228, and Ser271. Ser226, Asn228, and Ser271 together coordinate isopentenyl diphosphate.

It belongs to the IspH family. [4Fe-4S] cluster is required as a cofactor.

It catalyses the reaction isopentenyl diphosphate + 2 oxidized [2Fe-2S]-[ferredoxin] + H2O = (2E)-4-hydroxy-3-methylbut-2-enyl diphosphate + 2 reduced [2Fe-2S]-[ferredoxin] + 2 H(+). It carries out the reaction dimethylallyl diphosphate + 2 oxidized [2Fe-2S]-[ferredoxin] + H2O = (2E)-4-hydroxy-3-methylbut-2-enyl diphosphate + 2 reduced [2Fe-2S]-[ferredoxin] + 2 H(+). It functions in the pathway isoprenoid biosynthesis; dimethylallyl diphosphate biosynthesis; dimethylallyl diphosphate from (2E)-4-hydroxy-3-methylbutenyl diphosphate: step 1/1. Its pathway is isoprenoid biosynthesis; isopentenyl diphosphate biosynthesis via DXP pathway; isopentenyl diphosphate from 1-deoxy-D-xylulose 5-phosphate: step 6/6. Catalyzes the conversion of 1-hydroxy-2-methyl-2-(E)-butenyl 4-diphosphate (HMBPP) into a mixture of isopentenyl diphosphate (IPP) and dimethylallyl diphosphate (DMAPP). Acts in the terminal step of the DOXP/MEP pathway for isoprenoid precursor biosynthesis. The sequence is that of 4-hydroxy-3-methylbut-2-enyl diphosphate reductase from Bacillus licheniformis (strain ATCC 14580 / DSM 13 / JCM 2505 / CCUG 7422 / NBRC 12200 / NCIMB 9375 / NCTC 10341 / NRRL NRS-1264 / Gibson 46).